Reading from the N-terminus, the 479-residue chain is GTPase Der (479 aa).

2 consecutive EngA-type G domains span residues 3-167 and 208-383; these read FKVA…GEAR and MRIA…KVWN. GTP contacts are provided by residues 9–16, 56–60, 119–122, 214–221, 261–265, and 326–329; these read GRPNVGKS, DTAGF, NKAE, GRPNAGKS, DTAGM, and NKWD. The 85-residue stretch at 384 to 468 folds into the KH-like domain; that stretch reads SRVSTGKLNR…PIRIALRTSD (85 aa).

It belongs to the TRAFAC class TrmE-Era-EngA-EngB-Septin-like GTPase superfamily. EngA (Der) GTPase family. In terms of assembly, associates with the 50S ribosomal subunit.

Its function is as follows. GTPase that plays an essential role in the late steps of ribosome biogenesis. The sequence is that of GTPase Der from Mesorhizobium japonicum (strain LMG 29417 / CECT 9101 / MAFF 303099) (Mesorhizobium loti (strain MAFF 303099)).